The chain runs to 179 residues: Ribulose bisphosphate carboxylase small subunit, chloroplastic 2 (179 aa).

The transit peptide at M1–Q58 directs the protein to the chloroplast.

This sequence belongs to the RuBisCO small chain family. As to quaternary structure, heterohexadecamer of 8 large and 8 small subunits.

Its subcellular location is the plastid. The protein resides in the chloroplast. In terms of biological role, ruBisCO catalyzes two reactions: the carboxylation of D-ribulose 1,5-bisphosphate, the primary event in carbon dioxide fixation, as well as the oxidative fragmentation of the pentose substrate. Both reactions occur simultaneously and in competition at the same active site. Although the small subunit is not catalytic it is essential for maximal activity. This chain is Ribulose bisphosphate carboxylase small subunit, chloroplastic 2, found in Fritillaria agrestis (Stinkbells).